The sequence spans 205 residues: Probable DNA-binding protein (205 aa).

A disordered region spans residues 140 to 168 (GEGDGAPRPACPDFSTRGAETGNQGVQPG).

This is Probable DNA-binding protein from Homo sapiens (Human).